We begin with the raw amino-acid sequence, 1056 residues long: Carbamoyl phosphate synthase large chain (1056 aa).

Residues 1–398 (MPRDPSIKKV…AFLKALRSLD (398 aa)) form a carboxyphosphate synthetic domain region. ATP contacts are provided by arginine 127, arginine 167, glycine 173, glycine 174, glutamate 206, valine 208, glutamate 213, glycine 239, valine 240, histidine 241, glutamine 282, and glutamate 295. The region spanning 131–324 (RDLMNRIGEP…IARVASKIAI (194 aa)) is the ATP-grasp 1 domain. Residues glutamine 282, glutamate 295, and asparagine 297 each coordinate Mg(2+). Glutamine 282, glutamate 295, and asparagine 297 together coordinate Mn(2+). Residues 399–532 (TDVEHHTVLS…STYGDKVCEV (134 aa)) are oligomerization domain. Positions 533–921 (THSDRKKVMI…YKASIAAHNR (389 aa)) are carbamoyl phosphate synthetic domain. In terms of domain architecture, ATP-grasp 2 spans 663 to 854 (SVLLDSLSIP…LAKIAARVMM (192 aa)). The ATP site is built by arginine 699, arginine 738, leucine 740, glutamate 745, glycine 770, valine 771, histidine 772, serine 773, glutamine 813, and glutamate 825. Glutamine 813, glutamate 825, and asparagine 827 together coordinate Mg(2+). Mn(2+) contacts are provided by glutamine 813, glutamate 825, and asparagine 827. Positions 920 to 1056 (NRLPKSGNVF…IEPLQHYIGR (137 aa)) constitute an MGS-like domain. Residues 922-1056 (LPKSGNVFIS…IEPLQHYIGR (135 aa)) are allosteric domain.

It belongs to the CarB family. Composed of two chains; the small (or glutamine) chain promotes the hydrolysis of glutamine to ammonia, which is used by the large (or ammonia) chain to synthesize carbamoyl phosphate. Tetramer of heterodimers (alpha,beta)4. Requires Mg(2+) as cofactor. Mn(2+) is required as a cofactor.

It catalyses the reaction hydrogencarbonate + L-glutamine + 2 ATP + H2O = carbamoyl phosphate + L-glutamate + 2 ADP + phosphate + 2 H(+). It carries out the reaction hydrogencarbonate + NH4(+) + 2 ATP = carbamoyl phosphate + 2 ADP + phosphate + 2 H(+). The protein operates within amino-acid biosynthesis; L-arginine biosynthesis; carbamoyl phosphate from bicarbonate: step 1/1. It participates in pyrimidine metabolism; UMP biosynthesis via de novo pathway; (S)-dihydroorotate from bicarbonate: step 1/3. Large subunit of the glutamine-dependent carbamoyl phosphate synthetase (CPSase). CPSase catalyzes the formation of carbamoyl phosphate from the ammonia moiety of glutamine, carbonate, and phosphate donated by ATP, constituting the first step of 2 biosynthetic pathways, one leading to arginine and/or urea and the other to pyrimidine nucleotides. The large subunit (synthetase) binds the substrates ammonia (free or transferred from glutamine from the small subunit), hydrogencarbonate and ATP and carries out an ATP-coupled ligase reaction, activating hydrogencarbonate by forming carboxy phosphate which reacts with ammonia to form carbamoyl phosphate. The sequence is that of Carbamoyl phosphate synthase large chain from Methanospirillum hungatei JF-1 (strain ATCC 27890 / DSM 864 / NBRC 100397 / JF-1).